A 254-amino-acid polypeptide reads, in one-letter code: Pimeloyl-[acyl-carrier protein] methyl ester esterase (254 aa).

One can recognise an AB hydrolase-1 domain in the interval 14-242; it reads LVLLHGWGMN…ASHAPFISHP (229 aa). Residues Trp20, 82–83, and 143–147 contribute to the substrate site; these read SL and FLAIQ. The active-site Nucleophile is the Ser82. Catalysis depends on residues Asp207 and His235. His235 contributes to the substrate binding site.

Belongs to the AB hydrolase superfamily. Carboxylesterase BioH family. In terms of assembly, monomer.

It localises to the cytoplasm. It catalyses the reaction 6-carboxyhexanoyl-[ACP] methyl ester + H2O = 6-carboxyhexanoyl-[ACP] + methanol + H(+). It functions in the pathway cofactor biosynthesis; biotin biosynthesis. Its function is as follows. The physiological role of BioH is to remove the methyl group introduced by BioC when the pimeloyl moiety is complete. It allows to synthesize pimeloyl-ACP via the fatty acid synthetic pathway through the hydrolysis of the ester bonds of pimeloyl-ACP esters. The protein is Pimeloyl-[acyl-carrier protein] methyl ester esterase of Aeromonas salmonicida (strain A449).